We begin with the raw amino-acid sequence, 374 residues long: Cytochrome b (374 aa).

Transmembrane regions (helical) follow at residues 25–45, 69–90, 105–125, and 170–190; these read FGSMLLTCLMLQITTGFFLAI, WIIQNTHAMGASMFFICIYMHI, WLSGVSLLITLMATAFFGYVL, and FFALHFILPFIIISLSSIHII. The heme b site is built by histidine 75 and histidine 89. Heme b is bound by residues histidine 174 and histidine 188. Histidine 193 provides a ligand contact to a ubiquinone. 4 helical membrane-spanning segments follow: residues 218 to 238, 280 to 300, 312 to 332, and 339 to 358; these read YKDMLMTTILISILFYILSFT, LGGALALLLSIIILTSAPFTH, LAQILFWILATAFITITWTAT, and FITISQWTSTLYFSFFMINP.

It belongs to the cytochrome b family. As to quaternary structure, the cytochrome bc1 complex contains 3 respiratory subunits (MT-CYB, CYC1 and UQCRFS1), 2 core proteins (UQCRC1 and UQCRC2) and probably 6 low-molecular weight proteins. The cofactor is heme b.

Its subcellular location is the mitochondrion inner membrane. Its function is as follows. Component of the ubiquinol-cytochrome c reductase complex (complex III or cytochrome b-c1 complex) that is part of the mitochondrial respiratory chain. The b-c1 complex mediates electron transfer from ubiquinol to cytochrome c. Contributes to the generation of a proton gradient across the mitochondrial membrane that is then used for ATP synthesis. This is Cytochrome b (MT-CYB) from Calliophis bivirgatus (Blue Malaysian coral snake).